Here is a 72-residue protein sequence, read N- to C-terminus: SRY-related protein MG44 (72 aa).

A DNA-binding region (HMG box) is located at residues 1–69 (VKRPMNAFMV…KHMADYPNYK (69 aa)).

The protein localises to the nucleus. This is SRY-related protein MG44 from Tarentola mauritanica (Common wall gecko).